Reading from the N-terminus, the 681-residue chain is MENRTDNEYQLVSPYQPAGDQPKAIEALVQGVRDGRHWQTLLGVTGSGKTFTISNVIAQLNRPVLVMSHNKTLAAQLYGELKQFFPHNAVEYFISYYDFYQPEAYLPSLDKYIAKDLRINDEIERLRLRATSALLSGRKDVIVVSSVSCIYGLGSPEEWKAQIIKLRAGMEKDRDEFLRELISLHYLRDDVQPTSGRFRVRGDTIDLVPAHEELALRIEFFGSEIESLQTFDIQTGEILGDDEYAFIYPARQFVADEEKLQVAMLAIENELAGRLNLLRSENRFVEARRLEERTRYDLEMMKELGYCSGIENYSRHISGRPAGERPICLLDYFPEDYMVVVDESHVTLPQIRGMYGGDRSRKTVLVEHGFRLPSALDNRPLRFEEYEEMVPQVICISATPGEHELMRSGGEVVELLVRPTGLLDPPVEVRPVKGQIDNLLAEIRHHISIGHKALVMTLTKRMSEDLHDFFRKAGIRCRYLHSEIKSLERMQILRELRAGDIDVLVGVNLLREGLDLPEVSLVAILDADKEGFLRNTRSLMQIAGRAARNLDGFVVLYADVITRSIQEVLDETARRRAIQQRYNEEHGITPRSIVKSVDQILDTTGVADAEERYRRRRFGLEPKPERVLSGYADNLTPEKGYAIVEGLRLEMQEAAEHMEYEKAAYLRDEITKMEQVLKKDG.

In terms of domain architecture, Helicase ATP-binding spans 30–419 (QGVRDGRHWQ…GEVVELLVRP (390 aa)). 43-50 (GVTGSGKT) contributes to the ATP binding site. The short motif at 96–119 (YYDFYQPEAYLPSLDKYIAKDLRI) is the Beta-hairpin element. The 167-residue stretch at 435-601 (QIDNLLAEIR…SIVKSVDQIL (167 aa)) folds into the Helicase C-terminal domain. Positions 641 to 676 (YAIVEGLRLEMQEAAEHMEYEKAAYLRDEITKMEQV) constitute a UVR domain.

Belongs to the UvrB family. In terms of assembly, forms a heterotetramer with UvrA during the search for lesions. Interacts with UvrC in an incision complex.

It localises to the cytoplasm. Its function is as follows. The UvrABC repair system catalyzes the recognition and processing of DNA lesions. A damage recognition complex composed of 2 UvrA and 2 UvrB subunits scans DNA for abnormalities. Upon binding of the UvrA(2)B(2) complex to a putative damaged site, the DNA wraps around one UvrB monomer. DNA wrap is dependent on ATP binding by UvrB and probably causes local melting of the DNA helix, facilitating insertion of UvrB beta-hairpin between the DNA strands. Then UvrB probes one DNA strand for the presence of a lesion. If a lesion is found the UvrA subunits dissociate and the UvrB-DNA preincision complex is formed. This complex is subsequently bound by UvrC and the second UvrB is released. If no lesion is found, the DNA wraps around the other UvrB subunit that will check the other stand for damage. In Chlorobium chlorochromatii (strain CaD3), this protein is UvrABC system protein B.